The chain runs to 353 residues: Basic membrane protein C (353 aa).

The signal sequence occupies residues 1 to 16 (MFKRFIFITLSLLVFA). Residue C17 is the site of N-palmitoyl cysteine attachment. The S-diacylglycerol cysteine moiety is linked to residue C17.

Belongs to the BMP lipoprotein family. In terms of assembly, monomer.

It localises to the cell inner membrane. Its function is as follows. May be part of an ABC-type nucleoside uptake system involved in the purine salvage pathway. This Borreliella burgdorferi (strain N40) (Borrelia burgdorferi) protein is Basic membrane protein C (bmpC).